The primary structure comprises 264 residues: 1H-3-hydroxy-4-oxoquinoline 2,4-dioxygenase (264 aa).

Residues 30-32, 94-95, and tryptophan 153 contribute to the substrate site; these read WCQ and TS. Histidine 244 (proton donor/acceptor) is an active-site residue.

This sequence belongs to the AB hydrolase superfamily. It depends on None. Contrary to most other dioxygenases, this enzyme does not require a cofactor for catalysis. as a cofactor.

It catalyses the reaction 3-hydroxy-1H-quinolin-4-one + O2 = N-formylanthranilate + CO + H(+). In terms of biological role, ring-cleaving dioxygenase involved in oxoquinoline degradation and utilization. The protein is 1H-3-hydroxy-4-oxoquinoline 2,4-dioxygenase (qdo) of Pseudomonas putida (Arthrobacter siderocapsulatus).